A 1035-amino-acid polypeptide reads, in one-letter code: Kinesin-like protein KIN-4A (1035 aa).

The region spanning 10-369 (CVKVAVHVRP…LKYANRARNI (360 aa)) is the Kinesin motor domain. Position 89-96 (89-96 (GQTGSGKT)) interacts with ATP. 2 coiled-coil regions span residues 380-437 (VADE…LRNH) and 498-702 (MLQD…RKSS). Disordered stretches follow at residues 697–720 (EARK…HMTE), 766–787 (VMSG…NTLS), and 882–928 (HSES…PLSP). 2 stretches are compositionally biased toward polar residues: residues 704 to 716 (RDNS…SPGS) and 778 to 787 (NGNSRANTLS). Residues 850-904 (NVAADARCQVREKEMEIKEMKEQMTELVTILRHSESRRRETEKQLKQREQAAVTA) are a coiled coil. Over residues 882–898 (HSESRRRETEKQLKQRE) the composition is skewed to basic and acidic residues. The segment covering 902–926 (VTATTSPGNGNGSVKHSADDSNTPL) has biased composition (polar residues). Positions 971 to 987 (KKVSIAGQSGKLWRWKR) match the Nuclear localization signal motif. Positions 1014–1035 (DETMTRTRPRPQLLPHRPQRVM) are disordered.

This sequence belongs to the TRAFAC class myosin-kinesin ATPase superfamily. Kinesin family. KIN-4 subfamily. Homodimer. As to expression, expressed in young tissues with cell divisions, including initiating adventitious roots, primary root tips, flower primordia, intercalary meristems, sub-epidermal regions of young culms and panicles.

Its subcellular location is the nucleus. The protein resides in the cytoplasm. It is found in the cytoskeleton. Its activity is regulated as follows. May be regulated by cyclin-dependent kinase A. In terms of biological role, microtubule-dependent motor protein involved in the control of the oriented deposition of cellulose microfibrils. Involved in wall biogenesis and modification, and contributes to cell-cycle progression and cell division. Acts as a transcriptional activator in gibberellic acid (GA) biosynthesis pathway. Binds specifically to the DNA sequence 5'-ACCAACTTGAA-3' of the ent-kaurene oxidase 2 (CYP701A6 or OsKO2) promoter. May regulate CYP701A6 gene expression and mediates cell elongation by regulating the GA biosynthesis pathway. The protein is Kinesin-like protein KIN-4A of Oryza sativa subsp. japonica (Rice).